Reading from the N-terminus, the 971-residue chain is Isoleucine--tRNA ligase (971 aa).

A 'HIGH' region motif is present at residues 60 to 70 (PYANGDLHIGH). Glutamate 563 provides a ligand contact to L-isoleucyl-5'-AMP. The short motif at 604–608 (KMSKS) is the 'KMSKS' region element. Lysine 607 contributes to the ATP binding site. Zn(2+) contacts are provided by cysteine 922, cysteine 925, cysteine 942, and cysteine 945.

The protein belongs to the class-I aminoacyl-tRNA synthetase family. IleS type 1 subfamily. As to quaternary structure, monomer. Requires Zn(2+) as cofactor.

The protein localises to the cytoplasm. It carries out the reaction tRNA(Ile) + L-isoleucine + ATP = L-isoleucyl-tRNA(Ile) + AMP + diphosphate. In terms of biological role, catalyzes the attachment of isoleucine to tRNA(Ile). As IleRS can inadvertently accommodate and process structurally similar amino acids such as valine, to avoid such errors it has two additional distinct tRNA(Ile)-dependent editing activities. One activity is designated as 'pretransfer' editing and involves the hydrolysis of activated Val-AMP. The other activity is designated 'posttransfer' editing and involves deacylation of mischarged Val-tRNA(Ile). This is Isoleucine--tRNA ligase from Acaryochloris marina (strain MBIC 11017).